Here is a 343-residue protein sequence, read N- to C-terminus: Inositol 2-dehydrogenase (343 aa).

This sequence belongs to the Gfo/Idh/MocA family. Homotetramer.

It catalyses the reaction myo-inositol + NAD(+) = scyllo-inosose + NADH + H(+). In terms of biological role, involved in the oxidation of myo-inositol (MI) to 2-keto-myo-inositol (2KMI or 2-inosose). In Streptomyces avermitilis (strain ATCC 31267 / DSM 46492 / JCM 5070 / NBRC 14893 / NCIMB 12804 / NRRL 8165 / MA-4680), this protein is Inositol 2-dehydrogenase.